The primary structure comprises 110 residues: U12-hexatoxin-Hi1a (110 aa).

The N-terminal stretch at 1 to 18 (MRVALVFLVLSILAATHG) is a signal peptide. 3 disulfides stabilise this stretch: Cys72–Cys86, Cys79–Cys91, and Cys85–Cys104.

Expressed by the venom gland.

Its subcellular location is the secreted. Its function is as follows. Probable ion channel inhibitor. The protein is U12-hexatoxin-Hi1a of Hadronyche infensa (Fraser island funnel-web spider).